A 129-amino-acid chain; its full sequence is MPTIQQLIRHGRSMKASKTASPALEKCPQKRGVCTRVYTTTPKKPNSALRKVARVRLSNKIEVTAYIPGEGHNLQEHSIVLIRGGRVKDLPGVRYHIVRGSLDTSGVADRKQSRSKYGAKQPKAGAAKK.

D89 bears the 3-methylthioaspartic acid mark. The segment at S101–K129 is disordered. Residues K116–K129 are compositionally biased toward low complexity.

The protein belongs to the universal ribosomal protein uS12 family. As to quaternary structure, part of the 30S ribosomal subunit. Contacts proteins S8 and S17. May interact with IF1 in the 30S initiation complex.

In terms of biological role, with S4 and S5 plays an important role in translational accuracy. Interacts with and stabilizes bases of the 16S rRNA that are involved in tRNA selection in the A site and with the mRNA backbone. Located at the interface of the 30S and 50S subunits, it traverses the body of the 30S subunit contacting proteins on the other side and probably holding the rRNA structure together. The combined cluster of proteins S8, S12 and S17 appears to hold together the shoulder and platform of the 30S subunit. In Chlorobaculum parvum (strain DSM 263 / NCIMB 8327) (Chlorobium vibrioforme subsp. thiosulfatophilum), this protein is Small ribosomal subunit protein uS12.